An 86-amino-acid polypeptide reads, in one-letter code: Large ribosomal subunit protein bL31B (86 aa).

Belongs to the bacterial ribosomal protein bL31 family. Type B subfamily. In terms of assembly, part of the 50S ribosomal subunit.

The protein is Large ribosomal subunit protein bL31B of Streptococcus equi subsp. zooepidemicus (strain H70).